Reading from the N-terminus, the 181-residue chain is Bradykinin-potentiating and C-type natriuretic peptides (181 aa).

The first 23 residues, 1–23 (MFVSRLAASGLLLLALLAVSLDG), serve as a signal peptide directing secretion. The propeptide occupies 24-30 (KPLQQWS). Gln31 is subject to Pyrrolidone carboxylic acid. Residues 41 to 43 (LVV) constitute a propeptide that is removed on maturation. At Gln44 the chain carries Pyrrolidone carboxylic acid. 2 propeptides span residues 50–78 (TQLQ…AALD) and 90–157 (GSKA…KGLA). The segment at 74–153 (EAALDTPPAG…GGGGGGARRL (80 aa)) is disordered. Residues 104 to 114 (SKGASATSAAS) are compositionally biased toward low complexity. Positions 140-150 (AGGGGGGGGGA) are enriched in gly residues. Cys165 and Cys181 are joined by a disulfide.

The protein in the N-terminal section; belongs to the bradykinin-potentiating peptide family. This sequence in the C-terminal section; belongs to the natriuretic peptide family. Venom gland.

It is found in the secreted. In terms of biological role, bradykinin-potentiating peptide both inhibits the activity of the angiotensin-converting enzyme (ACE) and enhances the action of bradykinin by inhibiting the peptidases that inactivate it. It acts as an indirect hypotensive agent. Antagonizes the vasodilatory actions of bradykinin at the B2 bradykinin receptor. Has no demonstrable hypotensive activity when injected intravenously in rats. Its function is as follows. has a vasorelaxant activity in rat aortic strips and a diuretic potency in anesthetized rats. May act by activating natriuretic receptors (NPR1 and/or NPR2). The sequence is that of Bradykinin-potentiating and C-type natriuretic peptides from Crotalus durissus collilineatus (Brazilian rattlesnake).